The chain runs to 422 residues: Glutamyl-tRNA reductase (422 aa).

Residues Thr49–Arg52, Ser107, Glu112–Gln114, and Gln118 contribute to the substrate site. Residue Cys50 is the Nucleophile of the active site. Gly187–Ile192 lines the NADP(+) pocket.

This sequence belongs to the glutamyl-tRNA reductase family. Homodimer.

The enzyme catalyses (S)-4-amino-5-oxopentanoate + tRNA(Glu) + NADP(+) = L-glutamyl-tRNA(Glu) + NADPH + H(+). The protein operates within porphyrin-containing compound metabolism; protoporphyrin-IX biosynthesis; 5-aminolevulinate from L-glutamyl-tRNA(Glu): step 1/2. Its function is as follows. Catalyzes the NADPH-dependent reduction of glutamyl-tRNA(Glu) to glutamate 1-semialdehyde (GSA). In Stutzerimonas stutzeri (strain A1501) (Pseudomonas stutzeri), this protein is Glutamyl-tRNA reductase.